Consider the following 301-residue polypeptide: Cuticle collagen 1 (301 aa).

Residues 1-37 form the signal peptide; it reads METDGRLKAYKFVAYAAVGFSIAAVASVLLTLPMVYS. Residues 79–82 are furin-like endopeptidase recognition region; the sequence is RTTR. Triple-helical region stretches follow at residues 105–134, 153–179, 183–209, and 218–283; these read GPPG…PGKP, GPPG…PGTD, GSPG…PGTP, and GAPG…KGIC. The disordered stretch occupies residues 109-284; that stretch reads PAGAPGKPGK…GTPGEKGICP (176 aa). 2 stretches are compositionally biased toward pro residues: residues 131 to 164 and 184 to 193; these read PGKP…PGAP and SPGPRGPPGP. The span at 194–210 shows a compositional bias: low complexity; sequence AGEAGAPGPAGEPGTPA. Residues 226-258 are compositionally biased toward pro residues; the sequence is SGPPGPPGPPGAPGNDGPPGPPGPKGAPGPDGP.

Belongs to the cuticular collagen family. As to quaternary structure, collagen polypeptide chains are complexed within the cuticle by disulfide bonds and other types of covalent cross-links.

The protein localises to the secreted. Its subcellular location is the extracellular space. In terms of biological role, secreted collagen that forms part of the nematode cuticle, which functions as an exoskeleton and a barrier to protect the worm from its environment. Secretion and subsequent incorporation into the cuticle is likely mediated by bli-4, which probably cleaves at the N-terminal consensus furin cleavage site. In Caenorhabditis elegans, this protein is Cuticle collagen 1 (sqt-3).